Consider the following 433-residue polypeptide: MKIVVLGAGVLGVTSAWYLAKAGHEVTVIDRQEGPALETSFANAGEISPGYSSPWAAPGVPLKALKWMFQRHAPLVVQPRLDWQRVSWMARMLANCTSSAYAVNKSRMVRLAEYSRDCLGELRAETGIRYDERTQGTLQVFRKQQQLDAAGKDIEVLRADGVPFEVLDRDGCVAAEPGLAGSAERIVGGLRLPGDETGDCFLFTNRLAEMATEAGVTFRWGVSIEALEAEGGRISAVRTDKGRLTADRYVLAMGSYSPRMVRHLGLKLPVYPLKGYSLTIDIQDESRAPVSTVMDETYKVAITRLGDRIRVGGLAEIAGYDLSLNPRRKETLAKSVGELFGGAGDAEQALFWTGLRPMTPDGTPIVGATPIPNLYLNTGHGTLGWTMSAGSGRLIADLISGRKPDIAAEDLGYARYMRGAKAAGRPALQPARA.

Residue 3 to 17 (IVVLGAGVLGVTSAW) participates in FAD binding.

This sequence belongs to the DadA oxidoreductase family. FAD is required as a cofactor.

The catalysed reaction is a D-alpha-amino acid + A + H2O = a 2-oxocarboxylate + AH2 + NH4(+). It participates in amino-acid degradation; D-alanine degradation; NH(3) and pyruvate from D-alanine: step 1/1. Functionally, oxidative deamination of D-amino acids. The sequence is that of D-amino acid dehydrogenase from Paracoccus denitrificans (strain Pd 1222).